We begin with the raw amino-acid sequence, 133 residues long: MQLFVRAQELHTLEVTGQETVAQIKDHVASLEGIAPEDQVVLLAGSPLEDEATLGQCGVEALTTLEVAGRMLGGKVHGSLARAGKVRGQTPKVAKQEKKKKKTGRAKRRMQYNRRFVNVVPTFGKKKGPNANS.

The interval 84-110 (GKVRGQTPKVAKQEKKKKKTGRAKRRM) is disordered. Positions 97–110 (EKKKKKTGRAKRRM) are enriched in basic residues. Lys-125 bears the N6-succinyllysine mark.

It in the N-terminal section; belongs to the ubiquitin family. In the C-terminal section; belongs to the eukaryotic ribosomal protein eS30 family. As to quaternary structure, component of the 40S subunit of the ribosome. In terms of processing, FUBI is cleaved from ribosomal protein S30 by the deubiquitinase USP36 before the assembly of ribosomal protein S30 into pre-40S ribosomal particles. FUBI removal from ribosomal protein S30 is a crucial event for the final maturation of pre-40S particles.

It is found in the nucleus. The protein resides in the cytoplasm. Functionally, may have pro-apoptotic activity. Its function is as follows. Component of the 40S subunit of the ribosome. Contributes to the assembly and function of 40S ribosomal subunits. The protein is Ubiquitin-like FUBI-ribosomal protein eS30 fusion protein (Fau) of Mus musculus (Mouse).